We begin with the raw amino-acid sequence, 452 residues long: Ribosomal protein uS12 methylthiotransferase RimO (452 aa).

The 116-residue stretch at 3–118 folds into the MTTase N-terminal domain; it reads GKIGFVSLGC…VMQAIHLHLP (116 aa). Positions 12, 48, 77, 149, 153, and 156 each coordinate [4Fe-4S] cluster. A Radical SAM core domain is found at 135 to 381; the sequence is LTPKHYAYLK…MAKAEDISIK (247 aa). In terms of domain architecture, TRAM spans 384–452; that stretch reads AKKIGKRVQV…SQGHDLIAET (69 aa).

The protein belongs to the methylthiotransferase family. RimO subfamily. It depends on [4Fe-4S] cluster as a cofactor.

It is found in the cytoplasm. It carries out the reaction L-aspartate(89)-[ribosomal protein uS12]-hydrogen + (sulfur carrier)-SH + AH2 + 2 S-adenosyl-L-methionine = 3-methylsulfanyl-L-aspartate(89)-[ribosomal protein uS12]-hydrogen + (sulfur carrier)-H + 5'-deoxyadenosine + L-methionine + A + S-adenosyl-L-homocysteine + 2 H(+). Functionally, catalyzes the methylthiolation of an aspartic acid residue of ribosomal protein uS12. This is Ribosomal protein uS12 methylthiotransferase RimO from Polynucleobacter asymbioticus (strain DSM 18221 / CIP 109841 / QLW-P1DMWA-1) (Polynucleobacter necessarius subsp. asymbioticus).